Consider the following 464-residue polypeptide: Juvenile hormone epoxide hydrolase 1 (464 aa).

A helical membrane pass occupies residues 7–27 (MLIFAAIAGIAVLYYQITKEL). D224 (nucleophile) is an active-site residue. Y370 (proton donor) is an active-site residue. The Proton acceptor role is filled by H427.

The protein belongs to the peptidase S33 family. As to expression, developing oocytes, fat body and midgut epithelium of adults.

The protein resides in the microsome membrane. It is found in the endoplasmic reticulum membrane. The catalysed reaction is cis-stilbene oxide + H2O = (1R,2R)-hydrobenzoin. It catalyses the reaction 1-(4-methoxyphenyl)-N-methyl-N-[(3-methyloxetan-3-yl)methyl]methanamine + H2O = 2-{[(4-methoxybenzyl)(methyl)amino]methyl}-2-methylpropane-1,3-diol. In terms of biological role, catalyzes juvenile hormone hydrolysis. This chain is Juvenile hormone epoxide hydrolase 1, found in Ctenocephalides felis (Cat flea).